Reading from the N-terminus, the 521-residue chain is Glutamate--tRNA ligase (521 aa).

The 'HIGH' region signature appears at 13–23 (PSPSGFLHVGG). The 'KMSKS' region signature appears at 253–257 (KLSKR). An ATP-binding site is contributed by K256.

The protein belongs to the class-I aminoacyl-tRNA synthetase family. Glutamate--tRNA ligase type 1 subfamily. Monomer.

The protein resides in the cytoplasm. The catalysed reaction is tRNA(Glu) + L-glutamate + ATP = L-glutamyl-tRNA(Glu) + AMP + diphosphate. Its function is as follows. Catalyzes the attachment of glutamate to tRNA(Glu) in a two-step reaction: glutamate is first activated by ATP to form Glu-AMP and then transferred to the acceptor end of tRNA(Glu). This chain is Glutamate--tRNA ligase, found in Leptospira interrogans serogroup Icterohaemorrhagiae serovar copenhageni (strain Fiocruz L1-130).